The following is a 212-amino-acid chain: MKLEDIRREYLQNALSEDNLLDDPFKQFETWLEHAVASNLPDPTAMVVATVDDTGQPSQRIVLLKHLDNDGFVFFTNTGSRKAQELKGNNKISLHFPWHPMERQVIVYGEAKPLPTSAVAKYFLSRPKESQLAAWASAQSRPVSSRKVLMETFANMKNKFAKGEIPLPDFWGGYCVVPQKIEFWQGGAHRLHDRFMYQRQADNSWQITRLNP.

Residues 7–10 (RREY) and Lys-65 contribute to the substrate site. FMN contacts are provided by residues 60–65 (RIVLLK), 75–76 (FT), Arg-81, Lys-82, and Gln-104. Tyr-122, Arg-126, and Ser-130 together coordinate substrate. Residues 139-140 (QS) and Trp-184 contribute to the FMN site. 190-192 (RLH) contributes to the substrate binding site. FMN is bound at residue Arg-194.

Belongs to the pyridoxamine 5'-phosphate oxidase family. As to quaternary structure, homodimer. FMN is required as a cofactor.

The enzyme catalyses pyridoxamine 5'-phosphate + O2 + H2O = pyridoxal 5'-phosphate + H2O2 + NH4(+). The catalysed reaction is pyridoxine 5'-phosphate + O2 = pyridoxal 5'-phosphate + H2O2. The protein operates within cofactor metabolism; pyridoxal 5'-phosphate salvage; pyridoxal 5'-phosphate from pyridoxamine 5'-phosphate: step 1/1. It functions in the pathway cofactor metabolism; pyridoxal 5'-phosphate salvage; pyridoxal 5'-phosphate from pyridoxine 5'-phosphate: step 1/1. Catalyzes the oxidation of either pyridoxine 5'-phosphate (PNP) or pyridoxamine 5'-phosphate (PMP) into pyridoxal 5'-phosphate (PLP). The protein is Pyridoxine/pyridoxamine 5'-phosphate oxidase of Pseudoalteromonas translucida (strain TAC 125).